The following is a 372-amino-acid chain: Serine/threonine-protein kinase 17B (372 aa).

One can recognise a Protein kinase domain in the interval 33–293 (ILTSKELGRG…AEICLSHSWL (261 aa)). ATP contacts are provided by residues 39-47 (LGRGKFAVV) and Lys-62. The Proton acceptor role is filled by Asp-158. Positions 305-362 (EETSSSSQTQDHSVRSSEDKTSKSSCNGTCGDREDKENIPEDSSMVSKRFRFDDSLPN) are disordered. Basic and acidic residues predominate over residues 316–326 (HSVRSSEDKTS).

It belongs to the protein kinase superfamily. CAMK Ser/Thr protein kinase family. DAP kinase subfamily. In terms of assembly, interacts with CHP1; the interaction induces CHP1 to translocate from the Golgi to the nucleus. Autophosphorylated. Highly expressed in placenta, lung, pancreas. Lower levels in heart, brain, liver, skeletal muscle and kidney.

Its subcellular location is the nucleus. It localises to the cell membrane. The protein resides in the endoplasmic reticulum-Golgi intermediate compartment. The catalysed reaction is L-seryl-[protein] + ATP = O-phospho-L-seryl-[protein] + ADP + H(+). It carries out the reaction L-threonyl-[protein] + ATP = O-phospho-L-threonyl-[protein] + ADP + H(+). Functionally, phosphorylates myosin light chains. Acts as a positive regulator of apoptosis. The sequence is that of Serine/threonine-protein kinase 17B (STK17B) from Homo sapiens (Human).